Consider the following 626-residue polypeptide: Serine/threonine-protein kinase PknH (626 aa).

The Cytoplasmic portion of the chain corresponds to 1–403 (MSDAQDSRVG…QTPRKTNPWP (403 aa)). The Protein kinase domain maps to 16–276 (YHLKRLLGRG…DLALAAHEAL (261 aa)). Residues 22-30 (LGRGGMGEV) and Lys45 each bind ATP. The active-site Proton acceptor is Asp139. At Thr170 the chain carries Phosphothreonine. Residues 292–396 (QESTLPAPPK…GGPSPWAQTP (105 aa)) are disordered. Composition is skewed to pro residues over residues 297–308 (PAPPKPVPPPTM) and 316–342 (RQPPAPPVTPPGVQPAPKPSYTPPAQP). A compositionally biased stretch (low complexity) spans 343–355 (GPAGQRPGPTGQP). Residues 404 to 424 (LVAGAAAVVLVLVLGAIGIWI) traverse the membrane as a helical segment. The Extracellular portion of the chain corresponds to 425 to 626 (AIRPKPVQPP…AKIVDKVNKE (202 aa)). 2 disulfide bridges follow: Cys482–Cys545 and Cys587–Cys604.

The protein belongs to the protein kinase superfamily. Ser/Thr protein kinase family. Requires a divalent metal cation as cofactor. Post-translationally, autophosphorylated on threonine and serine residues. Dephosphorylated by PstP.

The protein resides in the cell membrane. It catalyses the reaction L-seryl-[protein] + ATP = O-phospho-L-seryl-[protein] + ADP + H(+). It carries out the reaction L-threonyl-[protein] + ATP = O-phospho-L-threonyl-[protein] + ADP + H(+). Its function is as follows. May regulate bacterial growth in response to external signals to facilitate adaptation to the host environment. In Mycobacterium tuberculosis (strain CDC 1551 / Oshkosh), this protein is Serine/threonine-protein kinase PknH (pknH).